Here is a 359-residue protein sequence, read N- to C-terminus: GTLLLLLSEALALTETWAGSHSLKYFHTSVSRPGRGEPRFISVGYVDDTQFVRFDNDAASPRMVPRAQWMEQEGPEYWDRETRSARDTAQTFRVNLRTLRGYYNQTEAGSHTLQWMHGCDLGPDGRFLRGYEQFAYDGKDYLTLNEDLRSWTAVDTAAQISERKSNDACEAEHQRAYLEDTCVEWLRKYLEKGKETLLHLDPPKTHVTHHRISDHEATLRCWALGFYPAEITLTWQRDGEDQNQYTELVETRPAGDGTFQKWAAVVVPSGEEQRYTCHVQHEGLPEPLTLRWEPASQTTIPIVGIFAGLVLLGAVVTGATVVAAVMWRKKSSGGKGGSYSKAEWSDSAQGSESLTACKA.

The N-terminal stretch at 1–18 (GTLLLLLSEALALTETWA) is a signal peptide. The tract at residues 19 to 108 (GSHSLKYFHT…LRGYYNQTEA (90 aa)) is alpha-1. Residues 19 to 302 (GSHSLKYFHT…EPASQTTIPI (284 aa)) lie on the Extracellular side of the membrane. Asn104 is a glycosylation site (N-linked (GlcNAc...) asparagine). The tract at residues 109–200 (GSHTLQWMHG…EKGKETLLHL (92 aa)) is alpha-2. 2 disulfide bridges follow: Cys119–Cys182 and Cys221–Cys277. The alpha-3 stretch occupies residues 201 to 292 (DPPKTHVTHH…GLPEPLTLRW (92 aa)). The region spanning 203-291 (PKTHVTHHRI…EGLPEPLTLR (89 aa)) is the Ig-like C1-type domain. The tract at residues 293 to 302 (EPASQTTIPI) is connecting peptide. A helical transmembrane segment spans residues 303-326 (VGIFAGLVLLGAVVTGATVVAAVM). Residues 327 to 359 (WRKKSSGGKGGSYSKAEWSDSAQGSESLTACKA) lie on the Cytoplasmic side of the membrane. The interval 330-359 (KSSGGKGGSYSKAEWSDSAQGSESLTACKA) is disordered. Residues 346 to 359 (DSAQGSESLTACKA) are compositionally biased toward polar residues. At Ser351 the chain carries Phosphoserine.

The protein belongs to the MHC class I family. In terms of assembly, heterodimer of an alpha chain and a beta chain (beta-2-microglobulin).

The protein resides in the membrane. In terms of biological role, involved in the presentation of foreign antigens to the immune system. This Pongo pygmaeus (Bornean orangutan) protein is Popy class I histocompatibility antigen, alpha chain E (Popy-E).